A 73-amino-acid chain; its full sequence is Translation initiation factor IF-1 (73 aa).

Residues 1 to 73 (MDIKEEAIET…TKGRIVYREK (73 aa)) enclose the S1-like domain.

The protein belongs to the IF-1 family. In terms of assembly, component of the 30S ribosomal translation pre-initiation complex which assembles on the 30S ribosome in the order IF-2 and IF-3, IF-1 and N-formylmethionyl-tRNA(fMet); mRNA recruitment can occur at any time during PIC assembly.

The protein localises to the cytoplasm. Its function is as follows. One of the essential components for the initiation of protein synthesis. Stabilizes the binding of IF-2 and IF-3 on the 30S subunit to which N-formylmethionyl-tRNA(fMet) subsequently binds. Helps modulate mRNA selection, yielding the 30S pre-initiation complex (PIC). Upon addition of the 50S ribosomal subunit IF-1, IF-2 and IF-3 are released leaving the mature 70S translation initiation complex. The polypeptide is Translation initiation factor IF-1 (Borreliella afzelii (strain PKo) (Borrelia afzelii)).